Here is a 293-residue protein sequence, read N- to C-terminus: Polyamine aminopropyltransferase (293 aa).

Residues 10 to 244 enclose the PABS domain; that stretch reads HIWFTEYHNN…GFWSFTLASK (235 aa). S-methyl-5'-thioadenosine is bound at residue Gln39. Residues His70 and Asp94 each coordinate spermidine. Residues Glu114 and 145–146 each bind S-methyl-5'-thioadenosine; that span reads DG. The Proton acceptor role is filled by Asp163. Spermidine is bound at residue 163 to 166; the sequence is DCPD. Pro170 contacts S-methyl-5'-thioadenosine.

This sequence belongs to the spermidine/spermine synthase family. As to quaternary structure, homodimer or homotetramer.

The protein localises to the cytoplasm. It catalyses the reaction S-adenosyl 3-(methylsulfanyl)propylamine + putrescine = S-methyl-5'-thioadenosine + spermidine + H(+). The protein operates within amine and polyamine biosynthesis; spermidine biosynthesis; spermidine from putrescine: step 1/1. Functionally, catalyzes the irreversible transfer of a propylamine group from the amino donor S-adenosylmethioninamine (decarboxy-AdoMet) to putrescine (1,4-diaminobutane) to yield spermidine. The sequence is that of Polyamine aminopropyltransferase from Methanocaldococcus jannaschii (strain ATCC 43067 / DSM 2661 / JAL-1 / JCM 10045 / NBRC 100440) (Methanococcus jannaschii).